The primary structure comprises 241 residues: Large ribosomal subunit protein uL1 (241 aa).

Belongs to the universal ribosomal protein uL1 family. Part of the 50S ribosomal subunit.

In terms of biological role, binds directly to 23S rRNA. The L1 stalk is quite mobile in the ribosome, and is involved in E site tRNA release. Protein L1 is also a translational repressor protein, it controls the translation of the L11 operon by binding to its mRNA. This Thermomicrobium roseum (strain ATCC 27502 / DSM 5159 / P-2) protein is Large ribosomal subunit protein uL1.